The chain runs to 438 residues: V-type ATP synthase beta chain (438 aa).

Belongs to the ATPase alpha/beta chains family.

In terms of biological role, produces ATP from ADP in the presence of a proton gradient across the membrane. The V-type beta chain is a regulatory subunit. The polypeptide is V-type ATP synthase beta chain (Chlamydia trachomatis serovar L2b (strain UCH-1/proctitis)).